The following is a 351-amino-acid chain: D-alanine--D-alanine ligase (351 aa).

In terms of domain architecture, ATP-grasp spans 135-343; it reads NQIFLQSGQK…MEEVFADLIE (209 aa). Position 167-222 (167-222) interacts with ATP; the sequence is LMSLGFPQFLKPVEGGSSVSTYKITNQEQLSRQLALIFESDSKVMSQSFLAGTEVS. Mg(2+)-binding residues include aspartate 298, glutamate 310, and asparagine 312.

This sequence belongs to the D-alanine--D-alanine ligase family. Mg(2+) serves as cofactor. The cofactor is Mn(2+).

The protein resides in the cytoplasm. The catalysed reaction is 2 D-alanine + ATP = D-alanyl-D-alanine + ADP + phosphate + H(+). It participates in cell wall biogenesis; peptidoglycan biosynthesis. In terms of biological role, cell wall formation. This Leptospira borgpetersenii serovar Hardjo-bovis (strain JB197) protein is D-alanine--D-alanine ligase.